Here is a 324-residue protein sequence, read N- to C-terminus: NADH-ubiquinone oxidoreductase chain 1 (324 aa).

8 consecutive transmembrane segments (helical) span residues 9–29, 75–95, 106–126, 142–162, 177–197, 228–248, 259–279, and 300–320; these read LTMA…LTLV, ILFI…WIPL, LGLL…LWSG, VAQT…VIML, PLYL…STLA, LFFL…AILF, ELFP…FLWV, and LPLT…YAGI.

Belongs to the complex I subunit 1 family.

The protein resides in the mitochondrion inner membrane. The enzyme catalyses a ubiquinone + NADH + 5 H(+)(in) = a ubiquinol + NAD(+) + 4 H(+)(out). In terms of biological role, core subunit of the mitochondrial membrane respiratory chain NADH dehydrogenase (Complex I) that is believed to belong to the minimal assembly required for catalysis. Complex I functions in the transfer of electrons from NADH to the respiratory chain. The immediate electron acceptor for the enzyme is believed to be ubiquinone. The sequence is that of NADH-ubiquinone oxidoreductase chain 1 (MT-ND1) from Struthio camelus (Common ostrich).